Reading from the N-terminus, the 24-residue chain is Retinol-binding protein 3 (24 aa).

The protein localises to the secreted. It is found in the extracellular space. It localises to the extracellular matrix. Its subcellular location is the interphotoreceptor matrix. IRBP shuttles 11-cis and all trans retinoids between the retinol isomerase in the pigment epithelium and the visual pigments in the photoreceptor cells of the retina. The polypeptide is Retinol-binding protein 3 (RBP3) (Ovis aries (Sheep)).